A 263-amino-acid polypeptide reads, in one-letter code: Probable 6-oxopurine nucleoside phosphorylase (263 aa).

Residues Thr-9, Arg-49–His-50, and Thr-82–Ala-83 each bind phosphate. Residue Met-181 participates in substrate binding. Thr-182 is a binding site for phosphate. Asn-205–Ala-207 contributes to the substrate binding site.

Belongs to the PNP/MTAP phosphorylase family. MTAP subfamily. As to quaternary structure, homohexamer. Dimer of a homotrimer.

The catalysed reaction is a purine D-ribonucleoside + phosphate = a purine nucleobase + alpha-D-ribose 1-phosphate. Its pathway is purine metabolism; purine nucleoside salvage. In terms of biological role, purine nucleoside phosphorylase which is highly specific for 6-oxopurine nucleosides. Cleaves guanosine or inosine to respective bases and sugar-1-phosphate molecules. Involved in purine salvage. This chain is Probable 6-oxopurine nucleoside phosphorylase, found in Dictyoglomus turgidum (strain DSM 6724 / Z-1310).